We begin with the raw amino-acid sequence, 473 residues long: Glycine--tRNA ligase (473 aa).

2 residues coordinate substrate: Arg-101 and Glu-172. Residues 204–206 (RNE), 214–219 (FRTREF), 289–290 (EL), and 333–336 (GVER) each bind ATP. A substrate-binding site is contributed by 219 to 223 (FEQME). Residue 329-333 (EPSVG) participates in substrate binding.

The protein belongs to the class-II aminoacyl-tRNA synthetase family. As to quaternary structure, homodimer.

The protein localises to the cytoplasm. The enzyme catalyses tRNA(Gly) + glycine + ATP = glycyl-tRNA(Gly) + AMP + diphosphate. Its function is as follows. Catalyzes the attachment of glycine to tRNA(Gly). In Ureaplasma urealyticum serovar 10 (strain ATCC 33699 / Western), this protein is Glycine--tRNA ligase.